A 145-amino-acid polypeptide reads, in one-letter code: 5-hydroxymethyl-dUMP N-hydrolase (145 aa).

Residues G7, I9, R10, G11, S79, G81, E85, and S109 each contribute to the 5-hydroxymethyl-dUMP site.

The protein belongs to the 2'-deoxynucleoside 5'-phosphate N-hydrolase 1 family. In terms of assembly, monomer and homodimer.

The protein localises to the cytoplasm. The protein resides in the nucleus. It carries out the reaction 5-hydroxymethyl-dUMP + H2O = 5-hydroxymethyluracil + 2-deoxy-D-ribose 5-phosphate. In terms of biological role, part of a nucleotide salvage pathway that eliminates epigenetically modified 5-hydroxymethyl-dCMP (hmdCMP) in a two-step process entailing deamination to cytotoxic 5-hydroxymethyl-dUMP (hmdUMP), followed by its hydrolysis into 5-hydroxymethyluracil (hmU) and 2-deoxy-D-ribose 5-phosphate (deoxyribosephosphate). Catalyzes the second step in that pathway, the hydrolysis of the N-glycosidic bond in hmdUMP, degrading this cytotoxic nucleotide to avoid its genomic integration. This is 5-hydroxymethyl-dUMP N-hydrolase from Esox lucius (Northern pike).